Reading from the N-terminus, the 293-residue chain is MDAPHSKAALDSINELPENILLELFTHVPARQLLLNCRLVCSLWRDLIDLMTLWKRKCLREGFITKDWDQPVADWKIFYFLRSLHRNLLRNPCAEEDMFAWQIDFNGGDRWKVESLPGAHGTDFPDPKVKKYFVTSYEMCLKSQLVDLVAEGYWEELLDTFRPDIVVKDWFAARADCGCTYQLKVQLASADYFVLASFEPPPVTIQQWNNATWTEVSYTFSDYPRGVRYILFQHGGRDTQYWAGWYGPRVTNSSIVVSPKMTRNQASSEAQPGQKHGQEEAAQSPYRAVVQIF.

One can recognise an F-box domain in the interval 10 to 57; it reads LDSINELPENILLELFTHVPARQLLLNCRLVCSLWRDLIDLMTLWKRK. Residues 78–259 enclose the FBA domain; it reads FYFLRSLHRN…VTNSSIVVSP (182 aa). Ser-258 carries the phosphoserine modification. The segment covering 261–271 has biased composition (polar residues); that stretch reads MTRNQASSEAQ. Positions 261 to 285 are disordered; the sequence is MTRNQASSEAQPGQKHGQEEAAQSP. Ser-284 carries the post-translational modification Phosphoserine.

Interacts with VCP. Part of a SCF (SKP1-cullin-F-box) protein ligase complex. Interacts with CHEK1 and CUL1.

It localises to the cytoplasm. It participates in protein modification; protein ubiquitination. Substrate-recognition component of some SCF (SKP1-CUL1-F-box protein)-type E3 ubiquitin ligase complexes. Involved in endoplasmic reticulum-associated degradation pathway (ERAD) for misfolded lumenal proteins by recognizing and binding sugar chains on unfolded glycoproteins that are retrotranslocated into the cytosol and promoting their ubiquitination and subsequent degradation. Able to recognize and bind denatured glycoproteins, which are modified with not only high-mannose but also complex-type oligosaccharides. Also recognizes sulfated glycans. Also involved in DNA damage response by specifically recognizing activated CHEK1 (phosphorylated on 'Ser-345'), promoting its ubiquitination and degradation. Ubiquitination of CHEK1 is required to ensure that activated CHEK1 does not accumulate as cells progress through S phase, or when replication forks encounter transient impediments during normal DNA replication. In Homo sapiens (Human), this protein is F-box only protein 6 (FBXO6).